The chain runs to 100 residues: Small ubiquitin-related modifier 1 (100 aa).

The segment covering 1–12 has biased composition (basic and acidic residues); it reads MSAAGEEDKKPA. The tract at residues 1-23 is disordered; that stretch reads MSAAGEEDKKPAGGEGGGAHINL. Residues 19-96 form the Ubiquitin-like domain; the sequence is AHINLKVKGQ…IDAMLHQTGG (78 aa). Residue Gly96 forms a Glycyl lysine isopeptide (Gly-Lys) (interchain with K-? in acceptor proteins) linkage.

It belongs to the ubiquitin family. SUMO subfamily. Interacts with SAE2, SCE1 and SIZ1. Covalently attached to a number of proteins.

It is found in the nucleus. Its subcellular location is the cytoplasm. Functionally, ubiquitin-like protein which can be covalently attached to target lysines as a monomer. Does not seem to be involved in protein degradation and may function as an antagonist of ubiquitin in the degradation process. The protein is Small ubiquitin-related modifier 1 (SUMO1) of Oryza sativa subsp. japonica (Rice).